A 231-amino-acid polypeptide reads, in one-letter code: Flagellar L-ring protein (231 aa).

Positions 1–18 are cleaved as a signal peptide; the sequence is MNRLLSVFALGGAVLLAG. The N-palmitoyl cysteine moiety is linked to residue Cys-19. Cys-19 is lipidated: S-diacylglycerol cysteine.

This sequence belongs to the FlgH family. The basal body constitutes a major portion of the flagellar organelle and consists of four rings (L,P,S, and M) mounted on a central rod.

It is found in the cell outer membrane. It localises to the bacterial flagellum basal body. Its function is as follows. Assembles around the rod to form the L-ring and probably protects the motor/basal body from shearing forces during rotation. This is Flagellar L-ring protein from Pseudomonas putida (strain ATCC 700007 / DSM 6899 / JCM 31910 / BCRC 17059 / LMG 24140 / F1).